Consider the following 224-residue polypeptide: Putative O-methyltransferase MMAR_4217 (224 aa).

Residues 1 to 11 (MHGTDSSSDTP) show a composition bias toward polar residues. A disordered region spans residues 1–20 (MHGTDSSSDTPGQPAPSRAE). S-adenosyl-L-methionine contacts are provided by residues Val51, Glu73, 75–76 (GT), Ser81, Asp99, and Ile100. Asp147 contributes to the substrate binding site. Asp149 contributes to the S-adenosyl-L-methionine binding site.

The protein belongs to the class I-like SAM-binding methyltransferase superfamily. Cation-dependent O-methyltransferase family.

This chain is Putative O-methyltransferase MMAR_4217, found in Mycobacterium marinum (strain ATCC BAA-535 / M).